We begin with the raw amino-acid sequence, 347 residues long: Protein RecA (347 aa).

Residue 65 to 72 participates in ATP binding; that stretch reads GPESSGKT.

It belongs to the RecA family.

The protein localises to the cytoplasm. Its function is as follows. Can catalyze the hydrolysis of ATP in the presence of single-stranded DNA, the ATP-dependent uptake of single-stranded DNA by duplex DNA, and the ATP-dependent hybridization of homologous single-stranded DNAs. It interacts with LexA causing its activation and leading to its autocatalytic cleavage. In Stutzerimonas stutzeri (Pseudomonas stutzeri), this protein is Protein RecA.